Consider the following 312-residue polypeptide: Aminoacyl tRNA synthase complex-interacting multifunctional protein 1 (312 aa).

Residue Met1 is modified to N-acetylmethionine. Residue Ala2 is modified to N-acetylalanine. The required for fibroblast proliferation stretch occupies residues 6–46; sequence AVLKRLEQKGAEADQIIEYLKQQVSLLKEKAILQATLREEK. The segment at 54–194 is interaction with HSP90B1; it reads KLKKEIEELK…APRTVVSGLV (141 aa). Positions 101–114 are required for endothelial cell death; that stretch reads AVTTVSSGTKEQIK. The disordered stretch occupies residues 107-147; the sequence is SGTKEQIKGGTGDEKKAKEKIEKKGEKKEKKQQSIAGSADS. The span at 111–138 shows a compositional bias: basic and acidic residues; the sequence is EQIKGGTGDEKKAKEKIEKKGEKKEKKQ. Positions 114–192 are required for endothelial cell migration; sequence KGGTGDEKKA…EIAPRTVVSG (79 aa). Residue Lys137 forms a Glycyl lysine isopeptide (Lys-Gly) (interchain with G-Cter in SUMO1) linkage. Phosphoserine is present on Ser140. The tRNA-binding domain maps to 151–252; the sequence is DVSRLDLRIG…NGSVPGDRIT (102 aa). Residue Lys269 is modified to N6-succinyllysine.

As to quaternary structure, homodimer. Part of the multisynthetase complex (MSC), a multisubunit complex that groups tRNA ligases for Arg (RARS1), Asp (DARS1), Gln (QARS1), Ile (IARS1), Leu (LARS1), Lys (KARS1), Met (MARS1) the bifunctional ligase for Glu and Pro (EPRS1) and the auxiliary subunits AIMP1/p43, AIMP2/p38 and EEF1E1/p18. Interacts (via N-terminus) with RARS1 (via N-terminus). Part of a complex composed of RARS1, QARS1 and AIMP1. Interacts (via C-terminus) with SMURF2. Interacts (via N-terminus) with HSP90B1/gp96 (via C-terminus). Interacts with PSMA7. Interacts with TARS3. In terms of processing, cleaved by caspase-7 in response to apoptosis to produce EMAP-II.

The protein localises to the nucleus. It localises to the cytoplasm. The protein resides in the cytosol. It is found in the secreted. Its subcellular location is the endoplasmic reticulum. The protein localises to the golgi apparatus. In terms of biological role, non-catalytic component of the multisynthase complex. Stimulates the catalytic activity of cytoplasmic arginyl-tRNA synthase. Binds tRNA. Possesses inflammatory cytokine activity. Negatively regulates TGF-beta signaling through stabilization of SMURF2 by binding to SMURF2 and inhibiting its SMAD7-mediated degradation. Involved in glucose homeostasis through induction of glucagon secretion at low glucose levels. Promotes dermal fibroblast proliferation and wound repair. Regulates KDELR1-mediated retention of HSP90B1/gp96 in the endoplasmic reticulum. Plays a role in angiogenesis by inducing endothelial cell migration at low concentrations and endothelian cell apoptosis at high concentrations. Induces maturation of dendritic cells and monocyte cell adhesion. Modulates endothelial cell responses by degrading HIF-1A through interaction with PSMA7. In Homo sapiens (Human), this protein is Aminoacyl tRNA synthase complex-interacting multifunctional protein 1 (AIMP1).